Reading from the N-terminus, the 42-residue chain is MALRRALPGWTQDDSYRIRRSGRAERGVRAHSPAWSERPTPN.

The segment at 20 to 42 is disordered; that stretch reads RSGRAERGVRAHSPAWSERPTPN.

This is an uncharacterized protein from Escherichia coli.